Consider the following 213-residue polypeptide: Large ribosomal subunit protein uL1 (213 aa).

Belongs to the universal ribosomal protein uL1 family. In terms of assembly, part of the 50S ribosomal subunit.

Functionally, binds directly to 23S rRNA. Probably involved in E site tRNA release. Protein L1 is also a translational repressor protein, it controls the translation of its operon by binding to its mRNA. The protein is Large ribosomal subunit protein uL1 of Methanococcus maripaludis (strain C6 / ATCC BAA-1332).